The sequence spans 193 residues: CASP-like protein 2D1 (193 aa).

Residues 1–24 are disordered; that stretch reads MRANNNNTREEERSSSSKQQQPQA. At 1–29 the chain is on the cytoplasmic side; the sequence is MRANNNNTREEERSSSSKQQQPQAHMSLK. The chain crosses the membrane as a helical span at residues 30-50; sequence IIDSCLRLSVVPLSVATIWLT. Residues 51–73 are Extracellular-facing; sequence VTNHESNPDYGNLDYNSIMGLKY. The helical transmembrane segment at 74–94 threads the bilayer; the sequence is MVGVSAISAIYALLSTISLWV. Over 95-109 the chain is Cytoplasmic; the sequence is TCLVSKAWLFFVPDQ. A helical transmembrane segment spans residues 110–132; the sequence is VLAYVMTTSVAGATEIVYLLNKG. The Extracellular portion of the chain corresponds to 133–151; sequence DKIVTWSEMCSSYPHYCSK. A helical membrane pass occupies residues 152 to 172; it reads LTIALGLHVFVLFFFLFLSVI. At 173 to 193 the chain is on the cytoplasmic side; it reads SAYRAFSPFDPPCDSQTNIDA.

It belongs to the Casparian strip membrane proteins (CASP) family. As to quaternary structure, homodimer and heterodimers.

The protein localises to the cell membrane. The protein is CASP-like protein 2D1 of Arabidopsis lyrata subsp. lyrata (Lyre-leaved rock-cress).